The sequence spans 532 residues: Nitrogenase molybdenum-iron protein alpha chain (532 aa).

The [8Fe-7S] cluster site is built by Cys62, Cys88, and Cys153. [7Fe-Mo-9S-C-homocitryl] cluster contacts are provided by Cys271 and His489.

Belongs to the NifD/NifK/NifE/NifN family. In terms of assembly, tetramer of two alpha and two beta chains. Forms complex with the iron protein (nitrogenase component 2). Requires [8Fe-7S] cluster as cofactor. [7Fe-Mo-9S-C-homocitryl] cluster is required as a cofactor.

It catalyses the reaction N2 + 8 reduced [2Fe-2S]-[ferredoxin] + 16 ATP + 16 H2O = H2 + 8 oxidized [2Fe-2S]-[ferredoxin] + 2 NH4(+) + 16 ADP + 16 phosphate + 6 H(+). Functionally, this molybdenum-iron protein is part of the nitrogenase complex that catalyzes the key enzymatic reactions in nitrogen fixation. This Methanosarcina barkeri protein is Nitrogenase molybdenum-iron protein alpha chain (nifD2).